Consider the following 824-residue polypeptide: Kinesin-like protein KIFC3 (824 aa).

The segment at 27 to 79 is disordered; sequence EPKPGMARPAPASPAARPFPHTGQGRLRTGRGKDILPSGEEDSTSRTAARPSL. Residues 33–46 show a composition bias toward low complexity; the sequence is ARPAPASPAARPFP. Coiled coils occupy residues 100 to 360 and 393 to 430; these read LTVQ…ENLA and LLQE…LQLR. In terms of domain architecture, Kinesin motor spans 443-766; the sequence is NIRVIARVRP…LRFAERVRSV (324 aa). 526–533 serves as a coordination point for ATP; sequence GQTGAGKT. The segment at 771–824 is disordered; sequence GSRRTELGSWSSQEHLEWEPACQTPQPTARAHSAPGSGTSSRPGSIRRKLQPSA. Phosphoserine occurs at positions 811 and 815. The span at 815–824 shows a compositional bias: basic residues; that stretch reads SIRRKLQPSA.

The protein belongs to the TRAFAC class myosin-kinesin ATPase superfamily. Kinesin family. Interacts with annexin XIIIB. Predominant expression in the kidney, testis and ovary. Also expressed in brain, heart, liver, lung and uterus.

Its subcellular location is the cytoplasm. It localises to the cytoskeleton. The protein localises to the cytoplasmic vesicle membrane. It is found in the cell junction. The protein resides in the adherens junction. Its subcellular location is the microtubule organizing center. It localises to the centrosome. In terms of biological role, minus-end microtubule-dependent motor protein. Involved in apically targeted transport. Required for zonula adherens maintenance. In Mus musculus (Mouse), this protein is Kinesin-like protein KIFC3 (Kifc3).